Here is a 215-residue protein sequence, read N- to C-terminus: Jasmonate monooxygenase ABM (215 aa).

In terms of domain architecture, ABM spans 2–90 (FAVIFETRPQ…GVLEDYHLRV (89 aa)).

It localises to the endoplasmic reticulum. It is found in the secreted. It catalyses the reaction jasmonate + NADPH + O2 + H(+) = (1R,2R)-12-hydroxyjasmonate + NADP(+) + H2O. Monooxygenase that converts the endogenous (and likely the host) jasmonate (JA) to its hydroxylated derivative 12-hydroxyjasmonate (12OH-JA), also known as tuberonic acid, a compound that attenuates or disables jasmonate-based host innate immunity and which is essential for proper initiation and elaboration of the blast disease in rice. ABM, together with a polyketide synthase MGG_04775 and the esterase MGG_04774, share the secondary metabolism gene cluster with ABC transporter ABC3, and therefore may also be involved in the synthesis of other important metabolites such as the ABC3 transporter efflux substrate (ATS) and/or additional polyketides. This chain is Jasmonate monooxygenase ABM, found in Pyricularia oryzae (strain 70-15 / ATCC MYA-4617 / FGSC 8958) (Rice blast fungus).